The following is a 396-amino-acid chain: Phosphoglycerate kinase (396 aa).

Residues 21–23 (DFN), R36, 59–62 (HLGR), R118, and R151 contribute to the substrate site. ATP is bound by residues K201, G292, E323, and 349–352 (GGDS).

Belongs to the phosphoglycerate kinase family. As to quaternary structure, monomer.

The protein resides in the cytoplasm. The catalysed reaction is (2R)-3-phosphoglycerate + ATP = (2R)-3-phospho-glyceroyl phosphate + ADP. Its pathway is carbohydrate degradation; glycolysis; pyruvate from D-glyceraldehyde 3-phosphate: step 2/5. The protein is Phosphoglycerate kinase of Leptospira interrogans serogroup Icterohaemorrhagiae serovar copenhageni (strain Fiocruz L1-130).